The chain runs to 266 residues: 3-methyl-2-oxobutanoate hydroxymethyltransferase (266 aa).

Mg(2+) is bound by residues Asp-43 and Asp-82. Residues 43 to 44, Asp-82, and Lys-110 contribute to the 3-methyl-2-oxobutanoate site; that span reads DS. Position 112 (Glu-112) interacts with Mg(2+). Glu-179 serves as the catalytic Proton acceptor.

Belongs to the PanB family. In terms of assembly, homodecamer; pentamer of dimers. Mg(2+) serves as cofactor.

Its subcellular location is the cytoplasm. It catalyses the reaction 3-methyl-2-oxobutanoate + (6R)-5,10-methylene-5,6,7,8-tetrahydrofolate + H2O = 2-dehydropantoate + (6S)-5,6,7,8-tetrahydrofolate. The protein operates within cofactor biosynthesis; (R)-pantothenate biosynthesis; (R)-pantoate from 3-methyl-2-oxobutanoate: step 1/2. Catalyzes the reversible reaction in which hydroxymethyl group from 5,10-methylenetetrahydrofolate is transferred onto alpha-ketoisovalerate to form ketopantoate. The polypeptide is 3-methyl-2-oxobutanoate hydroxymethyltransferase (Psychrobacter arcticus (strain DSM 17307 / VKM B-2377 / 273-4)).